Here is a 219-residue protein sequence, read N- to C-terminus: Probable lipoprotein YiaD (219 aa).

The N-terminal stretch at 1–20 (MKKRVYLIAAVVSGALAVSG) is a signal peptide. Cys-21 carries N-palmitoyl cysteine lipidation. Residue Cys-21 is the site of S-diacylglycerol cysteine attachment. The next 2 helical transmembrane spans lie at 37–55 (IGAGLGSLVGAGIGALSSS) and 62–84 (GALIGAAAGAALGGGVGYYMDVQ). The OmpA-like domain maps to 103-219 (GDNIILNMPN…RRVEITLSPL (117 aa)).

It is found in the cell inner membrane. Its subcellular location is the cell outer membrane. Suppresses temperature-sensitive mutations in BamB when overexpressed. This Escherichia coli (strain K12) protein is Probable lipoprotein YiaD (yiaD).